The primary structure comprises 198 residues: GTP cyclohydrolase-2 (198 aa).

49–53 serves as a coordination point for GTP; that stretch reads RVHSE. Residues Cys54, Cys65, and Cys67 each coordinate Zn(2+). GTP is bound by residues Gln70, 92 to 94, and Thr114; that span reads EGR. Asp126 functions as the Proton acceptor in the catalytic mechanism. Arg128 (nucleophile) is an active-site residue. Thr149 and Lys154 together coordinate GTP.

This sequence belongs to the GTP cyclohydrolase II family. Homodimer. Zn(2+) serves as cofactor.

It carries out the reaction GTP + 4 H2O = 2,5-diamino-6-hydroxy-4-(5-phosphoribosylamino)-pyrimidine + formate + 2 phosphate + 3 H(+). Its pathway is cofactor biosynthesis; riboflavin biosynthesis; 5-amino-6-(D-ribitylamino)uracil from GTP: step 1/4. Catalyzes the conversion of GTP to 2,5-diamino-6-ribosylamino-4(3H)-pyrimidinone 5'-phosphate (DARP), formate and pyrophosphate. The chain is GTP cyclohydrolase-2 from Escherichia fergusonii (strain ATCC 35469 / DSM 13698 / CCUG 18766 / IAM 14443 / JCM 21226 / LMG 7866 / NBRC 102419 / NCTC 12128 / CDC 0568-73).